The following is a 477-amino-acid chain: Succinate-semialdehyde dehydrogenase [NADP(+)] (477 aa).

NADP(+)-binding positions include 142–143 (WN), 166–169 (KHSE), and 218–219 (GS). Glu-240 functions as the Proton acceptor in the catalytic mechanism. An NADP(+)-binding site is contributed by Leu-241. Cys-274 functions as the Nucleophile in the catalytic mechanism. Glu-371 provides a ligand contact to NADP(+).

Belongs to the aldehyde dehydrogenase family.

It catalyses the reaction succinate semialdehyde + NADP(+) + H2O = succinate + NADPH + 2 H(+). The protein operates within amino-acid degradation; 4-aminobutanoate degradation. Functionally, catalyzes the NADP(+) dependent oxidation of succinate semialdehyde to succinate. In Deinococcus radiodurans (strain ATCC 13939 / DSM 20539 / JCM 16871 / CCUG 27074 / LMG 4051 / NBRC 15346 / NCIMB 9279 / VKM B-1422 / R1), this protein is Succinate-semialdehyde dehydrogenase [NADP(+)] (ssdA).